A 66-amino-acid polypeptide reads, in one-letter code: Beta-toxin Chui4 (66 aa).

The LCN-type CS-alpha/beta domain occupies 1–66; the sequence is KEGYLVELGT…VWPLKNKTCK (66 aa). 4 disulfides stabilise this stretch: cysteine 12/cysteine 65, cysteine 16/cysteine 41, cysteine 25/cysteine 46, and cysteine 29/cysteine 48.

The protein belongs to the long (4 C-C) scorpion toxin superfamily. Sodium channel inhibitor family. Beta subfamily. Expressed by the venom gland.

The protein localises to the secreted. Its function is as follows. Beta toxins bind voltage-independently at site-4 of sodium channels (Nav) and shift the voltage of activation toward more negative potentials thereby affecting sodium channel activation and promoting spontaneous and repetitive firing. Acts on human sodium channel Nav1.6/SCN8A. Also able to weakly shift the activation curves of human Nav1.2/SCN2A and Nav1.4/SCN4A. The polypeptide is Beta-toxin Chui4 (Centruroides huichol (Scorpion)).